A 322-amino-acid chain; its full sequence is Adenine deaminase (322 aa).

Zn(2+) contacts are provided by His-11, His-13, and His-189. Glu-192 (proton donor) is an active-site residue. Zn(2+) is bound at residue Asp-270. Asp-271 contacts substrate.

The protein belongs to the metallo-dependent hydrolases superfamily. Adenosine and AMP deaminases family. Adenine deaminase type 2 subfamily. Zn(2+) is required as a cofactor.

The catalysed reaction is adenine + H2O + H(+) = hypoxanthine + NH4(+). Catalyzes the hydrolytic deamination of adenine to hypoxanthine. Plays an important role in the purine salvage pathway and in nitrogen catabolism. This is Adenine deaminase from Rhizobium leguminosarum bv. trifolii (strain WSM2304).